Reading from the N-terminus, the 698-residue chain is Potassium-transporting ATPase ATP-binding subunit (698 aa).

Helical transmembrane passes span 56-76 (IMFV…VPSL), 82-102 (LWFN…ANFA), 240-260 (TVLI…PLFT), and 271-291 (ILVA…LSAI). The 4-aspartylphosphate intermediate role is filled by Asp324. ATP contacts are provided by residues Asp361, Glu365, 393-400 (FKAETRMS), and Lys412. Asp535 and Asp539 together coordinate Mg(2+). The next 3 helical transmembrane spans lie at 605–625 (FAII…LNIM), 633–653 (AILS…PLAM), and 677–697 (GGVL…GLFI).

This sequence belongs to the cation transport ATPase (P-type) (TC 3.A.3) family. Type IA subfamily. In terms of assembly, the system is composed of three essential subunits: KdpA, KdpB and KdpC.

The protein localises to the cell membrane. The enzyme catalyses K(+)(out) + ATP + H2O = K(+)(in) + ADP + phosphate + H(+). In terms of biological role, part of the high-affinity ATP-driven potassium transport (or Kdp) system, which catalyzes the hydrolysis of ATP coupled with the electrogenic transport of potassium into the cytoplasm. This subunit is responsible for energy coupling to the transport system and for the release of the potassium ions to the cytoplasm. This Bacillus cytotoxicus (strain DSM 22905 / CIP 110041 / 391-98 / NVH 391-98) protein is Potassium-transporting ATPase ATP-binding subunit.